Reading from the N-terminus, the 963-residue chain is Kinesin-1 heavy chain (963 aa).

N-acetylalanine is present on Ala2. In terms of domain architecture, Kinesin motor spans 8–325; it reads NIKVMCRFRP…LLFGQRAKTI (318 aa). An ATP-binding site is contributed by 85–92; the sequence is GQTSSGKT. A Glycyl lysine isopeptide (Lys-Gly) (interchain with G-Cter in SUMO2) cross-link involves residue Lys213. A coiled-coil region spans residues 329–914; that stretch reads VCVNVELTAE…AVRSKNMARR (586 aa). A disordered region spans residues 908–963; it reads SKNMARRGHSAQIAKPIRPGQHPAASPTHPSAIRGGGAFVQNSQPVAVRGGGGKQV. The tract at residues 915–963 is globular; it reads GHSAQIAKPIRPGQHPAASPTHPSAIRGGGAFVQNSQPVAVRGGGGKQV. Ser933 carries the post-translational modification Phosphoserine. Arg956 is subject to Omega-N-methylarginine.

It belongs to the TRAFAC class myosin-kinesin ATPase superfamily. Kinesin family. Kinesin subfamily. As to quaternary structure, oligomer composed of two heavy chains and two light chains. Interacts with GRIP1 and PPP1R42. Interacts with SYBU. Interacts with JAKMIP1. Interacts with PLEKHM2. Interacts with ECPAS. Interacts with ZFYVE27. Found in a complex with OGT, RHOT1, RHOT2 and TRAK1. Interacts with APP (via cytoplasmic domain).

It is found in the cytoplasm. It localises to the cytoskeleton. The protein localises to the cytolytic granule membrane. Its subcellular location is the lysosome membrane. In terms of biological role, microtubule-dependent motor required for normal distribution of mitochondria and lysosomes. Can induce formation of neurite-like membrane protrusions in non-neuronal cells in a ZFYVE27-dependent manner. Regulates centrosome and nuclear positioning during mitotic entry. During the G2 phase of the cell cycle in a BICD2-dependent manner, antagonizes dynein function and drives the separation of nuclei and centrosomes. Required for anterograde axonal transportation of MAPK8IP3/JIP3 which is essential for MAPK8IP3/JIP3 function in axon elongation. Through binding with PLEKHM2 and ARL8B, directs lysosome movement toward microtubule plus ends. Involved in NK cell-mediated cytotoxicity. Drives the polarization of cytolytic granules and microtubule-organizing centers (MTOCs) toward the immune synapse between effector NK lymphocytes and target cells. This is Kinesin-1 heavy chain from Homo sapiens (Human).